Reading from the N-terminus, the 291-residue chain is Elongation factor Ts (291 aa).

Residues 80 to 83 form an involved in Mg(2+) ion dislocation from EF-Tu region; that stretch reads TDFV.

This sequence belongs to the EF-Ts family.

The protein resides in the cytoplasm. In terms of biological role, associates with the EF-Tu.GDP complex and induces the exchange of GDP to GTP. It remains bound to the aminoacyl-tRNA.EF-Tu.GTP complex up to the GTP hydrolysis stage on the ribosome. The sequence is that of Elongation factor Ts from Acinetobacter baumannii (strain AB307-0294).